Here is a 365-residue protein sequence, read N- to C-terminus: Gibberellin 20 oxidase 1-B (365 aa).

Positions 199-299 (GNDSIMRLNY…RKSLAFFLCP (101 aa)) constitute a Fe2OG dioxygenase domain. Positions 224, 226, and 280 each coordinate Fe cation. Arg290 is an active-site residue.

Belongs to the iron/ascorbate-dependent oxidoreductase family. GA20OX subfamily. Fe cation is required as a cofactor. The cofactor is L-ascorbate. As to expression, not detected in nodes and the ear of the elongating stem.

The catalysed reaction is gibberellin A12 + 2 2-oxoglutarate + 3 O2 + H(+) = gibberellin A9 + 2 succinate + 3 CO2 + 2 H2O. It catalyses the reaction gibberellin A53 + 2 2-oxoglutarate + 3 O2 + H(+) = gibberellin A20 + 2 succinate + 3 CO2 + 2 H2O. Functionally, key oxidase enzyme in the biosynthesis of gibberellin that catalyzes the conversion of GA12 and GA53 to GA9 and GA20 respectively, via a three-step oxidation at C-20 of the GA skeleton. The protein is Gibberellin 20 oxidase 1-B (GA20ox1B) of Triticum aestivum (Wheat).